The following is a 274-amino-acid chain: uncharacterized protein (274 aa).

Residues 238 to 258 (ILSVQVIFATVIALIAISVFC) traverse the membrane as a helical segment.

It is found in the membrane. This is an uncharacterized protein from Schizosaccharomyces pombe (strain 972 / ATCC 24843) (Fission yeast).